Reading from the N-terminus, the 372-residue chain is Glutamate 5-kinase (372 aa).

Lysine 14 contacts ATP. Serine 54, aspartate 141, and asparagine 153 together coordinate substrate. Position 173-174 (173-174 (TD)) interacts with ATP. Residues 280–358 (RGHVVIDAGA…GEIESVLGYM (79 aa)) enclose the PUA domain.

This sequence belongs to the glutamate 5-kinase family.

The protein localises to the cytoplasm. The enzyme catalyses L-glutamate + ATP = L-glutamyl 5-phosphate + ADP. It participates in amino-acid biosynthesis; L-proline biosynthesis; L-glutamate 5-semialdehyde from L-glutamate: step 1/2. Its function is as follows. Catalyzes the transfer of a phosphate group to glutamate to form L-glutamate 5-phosphate. The chain is Glutamate 5-kinase from Burkholderia lata (strain ATCC 17760 / DSM 23089 / LMG 22485 / NCIMB 9086 / R18194 / 383).